A 264-amino-acid polypeptide reads, in one-letter code: MENVLRVVILGFIQGIAEFLPISSSGHLLLLKKFMHIDLPIVFDIYLHLATVLVVMIYYCRRILELVAVLVKFVLGKTTECDFAKLRLILLILIITIITAFIGIFIEMFKGLFTLNLVLINFIVTSILLFLLESRIVIFDLKRNILLAGCLIGTMQGIGAMPGISRSGITIFASVLLGFSRSESFEISFLSLIPIVFGSLLLKYKELFESDMLFSIFEINLGAIIAFLVGLFSISLFVKMLQDSKLYYFSVYLIILVSLVYFLF.

The next 8 membrane-spanning stretches (helical) occupy residues 7-27 (VVILGFIQGIAEFLPISSSGH), 39-59 (LPIVFDIYLHLATVLVVMIYY), 89-109 (ILLILIITIITAFIGIFIEMF), 112-132 (LFTLNLVLINFIVTSILLFLL), 145-165 (ILLAGCLIGTMQGIGAMPGIS), 182-202 (SESFEISFLSLIPIVFGSLLL), 212-232 (MLFSIFEINLGAIIAFLVGLF), and 244-264 (SKLYYFSVYLIILVSLVYFLF).

Belongs to the UppP family.

It localises to the cell inner membrane. The catalysed reaction is di-trans,octa-cis-undecaprenyl diphosphate + H2O = di-trans,octa-cis-undecaprenyl phosphate + phosphate + H(+). Functionally, catalyzes the dephosphorylation of undecaprenyl diphosphate (UPP). Confers resistance to bacitracin. The chain is Undecaprenyl-diphosphatase from Borrelia hermsii (strain HS1 / DAH).